Reading from the N-terminus, the 218-residue chain is Cytidylate kinase (218 aa).

Glycine 11–threonine 19 is an ATP binding site.

The protein belongs to the cytidylate kinase family. Type 1 subfamily.

The protein localises to the cytoplasm. The catalysed reaction is CMP + ATP = CDP + ADP. The enzyme catalyses dCMP + ATP = dCDP + ADP. This is Cytidylate kinase from Neisseria gonorrhoeae (strain ATCC 700825 / FA 1090).